The primary structure comprises 448 residues: Beclin-1 (448 aa).

N-acetylmethionine is present on Met-1. Ser-14 and Ser-29 each carry phosphoserine. The tract at residues 47 to 66 is disordered; that stretch reads TTAQAKPGETQEEEANSGEE. 3 positions are modified to phosphoserine; by AMPK: Ser-88, Ser-91, and Ser-94. A BH3 motif is present at residues 106–125; it reads TMENLSRRLKVTGDLFDIMS. The interaction with BCL2 and BCL2L1 isoform Bcl-X(L) stretch occupies residues 110-157; the sequence is LSRRLKVTGDLFDIMSGQTDVDHPLCEECTDTLLDQLDTQLNVTENEC. The residue at position 117 (Thr-117) is a Phosphothreonine; by DAPK1. Residues 140-268 adopt a coiled-coil conformation; it reads DTLLDQLDTQ…LDKLKKTNVF (129 aa). An evolutionary conserved domain (ECD) region spans residues 243 to 448; it reads DELKSVENQV…AWVSSQFYNK (206 aa). Glycyl lysine isopeptide (Lys-Gly) (interchain with G-Cter in ubiquitin) cross-links involve residues Lys-400 and Lys-435. The tract at residues 423–448 is required for membrane-association; sequence WTKALKFMLTNLKWGLAWVSSQFYNK.

Belongs to the beclin family. As to quaternary structure, a homodimeric form is proposed to exist; this metastable form readily transits to ATG14- or UVRAG-containing complexes with BECN1:UVRAG being more stable than BECN1:ATG14. Component of the PI3K (PI3KC3/PI3K-III/class III phosphatidylinositol 3-kinase) complex whose core is composed of the catalytic subunit PIK3C3, the regulatory subunit PIK3R4 and BECN1, and associates with additional regulatory/auxiliary subunits to form alternative complex forms. Accepted alternative complex forms containing a fourth regulatory subunit in a mutually exclusive manner are PI3K complex I (PI3KC3-C1) containing ATG14, and PI3K complex II (PI3KC3-C2) containing UVRAG. PI3KC3-C1 displays a V-shaped architecture with PIK3R4 serving as a bridge between PIK3C3 and the ATG14:BECN1 subcomplex. Both, PI3KC3-C1 and PI3KC3-C2, can associate with further regulatory subunits, such as RUBCN, SH3GLB1/Bif-1 and AMBRA1. PI3KC3-C1 probably associates with PIK3CB. Forms a complex with PPP2CA and AMBRA1; AMBRA1 and BECN1 components of the complex regulate MYC stability via different pathways. Component of the complex, at least composed of LRPPRC, BECN1 and BCL2; the interactions prevent BECN1 from forming an autophagy-inducing complex with PIK3C3. Interacts with AMBRA1, GOPC, GRID2 and PIK3CB. Interacts with BCL2 and BCL2L1 isoform Bcl-X(L); the interaction inhibits BECN1 function in promoting autophagy by interfering with the formation of the PI3K complex. Interacts with cytosolic HMGB1; inhibits the interaction of BECN1 and BCL2 leading to promotion of autophagy. Interacts with USP10, USP13, VMP1, DAPK1. Interacts with the poly-Gln domain of ATXN3; the interaction causes deubiquitination at Lys-400 and stabilizes BECN1. Interacts with SLAMF1. Interacts with TRIM5; the interaction causes activation of BECN1 by causing its dissociation from its inhibitors BCL2 and TAB2. Interacts with active ULK1 (phosphorylated on 'Ser-317') and MEFV simultaneously. Interacts with TRIM50. Interacts with TRIM16. Interacts with WDR81 and WDR91; negatively regulates the PI3 kinase/PI3K activity associated with endosomal membranes. Interacts with LAPTM4B; competes with EGFR for LAPTM4B binding; regulates EGFR activity. Interacts with ATG14; this interaction is increased in the absence of TMEM39A. Interacts with WASHC1; preventing interaction with AMBRA1 and the DCX(AMBRA1) complex and subsequent ubiquitination. Interacts with TRIM17. Interacts with BCL2L10/BCL-B (via BH1 domain). Interacts with SH3BGRL. Interacts with Irgm1; enhancing BECN1-interacting partners and influencing the composition of the BECN1 complex. Interacts with ARMC3. Interacts with LRPPRC. (Microbial infection) Interacts with murine gammaherpesvirus 68 M11; the viral protein binds BECN1 with higher affinity than cellular BCL2. Post-translationally, phosphorylation at Thr-117 by DAPK1 reduces its interaction with BCL2 and BCL2L1 and promotes induction of autophagy. In response to autophagic stimuli, phosphorylated at serine residues by AMPK in an ATG14-dependent manner, and this phosphorylation is critical for maximally efficient autophagy. In terms of processing, polyubiquitinated by NEDD4, both with 'Lys-11'- and 'Lys-63'-linkages. 'Lys-11'-linked polyubiquitination leads to degradation and is enhanced when the stabilizing interaction partner VPS34 is depleted. Deubiquitinated by USP10 and USP13, leading to stabilize the PIK3C3/VPS34-containing complexes. Polyubiquitinated at Lys-400 with 'Lys-48'-linkages. 'Lys-48'-linked poyubiquitination of Lys-400 leads to degradation. Deubiquitinated by ATXN3, leading to stabilization. Ubiquitinated at Lys-435 via 'Lys-63'-linkage by the DCX(AMBRA1) complex, thereby increasing the association between BECN1 and PIK3C3 to promote PIK3C3 activity. 'Lys-48'-linked ubiquitination by RNF216 leads to proteasomal degradation and autophagy inhibition. Proteolytically processed by caspases including CASP8 and CASP3; the C-terminal fragments lack autophagy-inducing capacity and are proposed to induce apoptosis. Thus the cleavage is proposed to be an determinant to switch from autophagy to apoptosis pathways affecting cellular homeostasis including viral infections and survival of tumor cells.

It is found in the cytoplasm. It localises to the golgi apparatus. The protein resides in the trans-Golgi network membrane. Its subcellular location is the endosome membrane. The protein localises to the endoplasmic reticulum membrane. It is found in the mitochondrion membrane. It localises to the endosome. The protein resides in the cytoplasmic vesicle. Its subcellular location is the autophagosome. The protein localises to the mitochondrion. It is found in the nucleus. Functionally, plays a central role in autophagy. Acts as a core subunit of different PI3K complex forms that mediate formation of phosphatidylinositol 3-phosphate and are believed to play a role in multiple membrane trafficking pathways: PI3KC3-C1 is involved in initiation of autophagosomes and PI3KC3-C2 in maturation of autophagosomes and endocytosis. Involved in regulation of degradative endocytic trafficking and required for the abscission step in cytokinesis, probably in the context of PI3KC3-C2. Essential for the formation of PI3KC3-C2 but not PI3KC3-C1 PI3K complex forms. Involved in endocytosis including endosome formation in neuronal cells. May play a role in antiviral host defense. Its function is as follows. Beclin-1-C 35 kDa localized to mitochondria can promote apoptosis; it induces the mitochondrial translocation of BAX and the release of proapoptotic factors. In Mus musculus (Mouse), this protein is Beclin-1 (Becn1).